The sequence spans 356 residues: Mannonate dehydratase 2 (356 aa).

It belongs to the mannonate dehydratase family. It depends on Fe(2+) as a cofactor. Mn(2+) serves as cofactor.

The enzyme catalyses D-mannonate = 2-dehydro-3-deoxy-D-gluconate + H2O. It functions in the pathway carbohydrate metabolism; pentose and glucuronate interconversion. Its function is as follows. Catalyzes the dehydration of D-mannonate. The sequence is that of Mannonate dehydratase 2 from Bacillus licheniformis (strain ATCC 14580 / DSM 13 / JCM 2505 / CCUG 7422 / NBRC 12200 / NCIMB 9375 / NCTC 10341 / NRRL NRS-1264 / Gibson 46).